The primary structure comprises 670 residues: Zinc finger and BTB domain-containing protein 5 (670 aa).

One can recognise a BTB domain in the interval 24–93; the sequence is CDCVIVVGNR…MYTSTLMLGE (70 aa). Disordered stretches follow at residues 158–256 and 268–382; these read LSSS…QEDG and EDAQ…SSTD. Over residues 170 to 181 the composition is skewed to polar residues; the sequence is PMSSSMRSSLDQ. Serine 234 is modified (phosphoserine). A Glycyl lysine isopeptide (Lys-Gly) (interchain with G-Cter in SUMO2) cross-link involves residue lysine 239. The span at 285 to 295 shows a compositional bias: polar residues; that stretch reads SRATQVETSFE. Glycyl lysine isopeptide (Lys-Gly) (interchain with G-Cter in SUMO2) cross-links involve residues lysine 317 and lysine 325. Positions 345–360 are enriched in low complexity; sequence AEGSESVEVEGVVVSA. The segment covering 361-374 has biased composition (basic and acidic residues); that stretch reads EKIDLSPESSDRSF. Serine 366 bears the Phosphoserine mark. Glycyl lysine isopeptide (Lys-Gly) (interchain with G-Cter in SUMO2) cross-links involve residues lysine 399 and lysine 410. The span at 414 to 432 shows a compositional bias: polar residues; the sequence is SNFSASQSTDDNLPNTTSD. 2 disordered regions span residues 414-433 and 442-470; these read SNFS…TSDC and LLSP…EPAD. A compositionally biased stretch (low complexity) spans 444-459; it reads SPEAGPAGGPSSAPGS. Residues lysine 535, lysine 587, and lysine 590 each participate in a glycyl lysine isopeptide (Lys-Gly) (interchain with G-Cter in SUMO2) cross-link. The C2H2-type 1 zinc finger occupies 606 to 628; it reads YACKICCKTFLTLTDCKKHIRVH. Residues 634-657 form a C2H2-type 2; atypical zinc finger; sequence YACLKCGKRFSQSSHLYKHSKTTC. Glycyl lysine isopeptide (Lys-Gly) (interchain with G-Cter in SUMO2) cross-links involve residues lysine 638 and lysine 651.

Its subcellular location is the nucleus. In terms of biological role, may be involved in transcriptional regulation. The polypeptide is Zinc finger and BTB domain-containing protein 5 (Zbtb5) (Mus musculus (Mouse)).